The primary structure comprises 219 residues: MKIGSGEKLLFIGDSITDCGRARPEGEGSFGALGTGYVAYVVGLLQAVYPELGIRVVNKGISGNTVRDLKARWEEDVIAQKPDWVSIMIGINDVWRQYDLPFMKEKHVYLDEYEATLRSLVLETKPLVKGIILMTPFYIEGNEQDPMRRTMDQYGRVVKQIAEETNSLFVDTQAAFNEVLKTLYPAALAWDRVHPSVAGHMILARAFLREIGFEWVRSR.

Ser-15 functions as the Nucleophile in the catalytic mechanism. Residues Asp-191 and His-194 each act as charge relay system in the active site.

It belongs to the 'GDSL' lipolytic enzyme family. Homooctamer, presenting a unique donut-shaped quaternary structure built of two staggered tetrameric rings. The eight active sites are organized in four closely situated pairs, which face the relatively wide internal cavity.

It localises to the cytoplasm. It catalyses the reaction Deacetylation of xylans and xylo-oligosaccharides.. It functions in the pathway glycan degradation; xylan degradation. Acetylxylan esterase involved in the degradation of xylan, a major structural heterogeneous polysaccharide found in plant biomass representing the second most abundant polysaccharide in the biosphere, after cellulose. Cleaves acetyl side groups from the xylose backbone units of the hemicellulolytic polymer xylan and xylo-oligosaccharides. Hydrolyzes about 20%-30% of the available acetyl groups on fully acetylated birch wood xylan. Completely deacetylates xylobiose peracetate (fully acetylated), and is active on both the alpha- and beta-forms of the sugar. Also hydrolyzes fully acetylated methyl-beta-D-xylopyranoside and methyl-beta-D-glucopyranoside, and the synthetic substrates 2-naphthyl acetate, 4-nitrophenyl acetate, 4-methylumbelliferyl acetate, and phenyl acetate. This is Acetylxylan esterase from Geobacillus stearothermophilus (Bacillus stearothermophilus).